The primary structure comprises 470 residues: Neuraminidase (470 aa).

Topologically, residues 1–14 are intravirion; sequence MNPNQKIITIGSIS. Residues 11–32 are involved in apical transport and lipid raft association; it reads GSISLGLVVFNVLLHVVSIIVT. Residues 15 to 35 traverse the membrane as a helical segment; it reads LGLVVFNVLLHVVSIIVTVLV. Residues 32–86 are hypervariable stalk region; it reads TVLVLGKGGNNGICNETVVREYNETVRIEKVTQWHNTNVVEYVPYWNGGTYMNNT. The Virion surface segment spans residues 36–470; it reads LGKGGNNGIC…AILPFDIDKM (435 aa). Asn-46, Asn-54, and Asn-84 each carry an N-linked (GlcNAc...) asparagine; by host glycan. The head of neuraminidase stretch occupies residues 89–470; the sequence is ICDAKGFAPF…AILPFDIDKM (382 aa). 8 disulfides stabilise this stretch: Cys-90/Cys-417, Cys-122/Cys-127, Cys-182/Cys-229, Cys-231/Cys-236, Cys-277/Cys-290, Cys-279/Cys-288, Cys-316/Cys-335, and Cys-421/Cys-446. Arg-116 provides a ligand contact to substrate. Asn-144 carries an N-linked (GlcNAc...) asparagine; by host glycan. The Proton donor/acceptor role is filled by Asp-149. A substrate-binding site is contributed by Arg-150. Substrate is bound at residue 275 to 276; the sequence is EE. Residue Arg-291 coordinates substrate. 3 residues coordinate Ca(2+): Asp-292, Gly-296, and Asp-322. Arg-368 contributes to the substrate binding site. An N-linked (GlcNAc...) asparagine; by host glycan is attached at Asn-398. The Nucleophile role is filled by Tyr-402.

This sequence belongs to the glycosyl hydrolase 34 family. In terms of assembly, homotetramer. It depends on Ca(2+) as a cofactor. In terms of processing, N-glycosylated.

Its subcellular location is the virion membrane. It is found in the host apical cell membrane. It carries out the reaction Hydrolysis of alpha-(2-&gt;3)-, alpha-(2-&gt;6)-, alpha-(2-&gt;8)- glycosidic linkages of terminal sialic acid residues in oligosaccharides, glycoproteins, glycolipids, colominic acid and synthetic substrates.. With respect to regulation, inhibited by the neuraminidase inhibitors zanamivir (Relenza) and oseltamivir (Tamiflu). These drugs interfere with the release of progeny virus from infected cells and are effective against all influenza strains. Resistance to neuraminidase inhibitors is quite rare. Functionally, catalyzes the removal of terminal sialic acid residues from viral and cellular glycoconjugates. Cleaves off the terminal sialic acids on the glycosylated HA during virus budding to facilitate virus release. Additionally helps virus spread through the circulation by further removing sialic acids from the cell surface. These cleavages prevent self-aggregation and ensure the efficient spread of the progeny virus from cell to cell. Otherwise, infection would be limited to one round of replication. Described as a receptor-destroying enzyme because it cleaves a terminal sialic acid from the cellular receptors. May facilitate viral invasion of the upper airways by cleaving the sialic acid moieties on the mucin of the airway epithelial cells. Likely to plays a role in the budding process through its association with lipid rafts during intracellular transport. May additionally display a raft-association independent effect on budding. Plays a role in the determination of host range restriction on replication and virulence. Sialidase activity in late endosome/lysosome traffic seems to enhance virus replication. In Influenza A virus (strain A/Duck/Ukraine/1/1963 H3N8), this protein is Neuraminidase.